Here is a 366-residue protein sequence, read N- to C-terminus: 5-hydroxytryptamine receptor 1F (366 aa).

The Extracellular segment spans residues 1–24; the sequence is MDFLNSSDQNLTSEELLNRMPSKI. Asparagine 5 and asparagine 10 each carry an N-linked (GlcNAc...) asparagine glycan. The chain crosses the membrane as a helical span at residues 25 to 49; sequence LVSLTLSGLALMTTTINSLVIAAII. Residues 50-59 lie on the Cytoplasmic side of the membrane; it reads VTRKLHHPAN. A helical transmembrane segment spans residues 60–81; it reads YLICSLAVTDFLVAVLVMPFSI. The Extracellular segment spans residues 82 to 96; that stretch reads VYIVRESWIMGQVVC. Residues cysteine 96 and cysteine 172 are joined by a disulfide bond. The chain crosses the membrane as a helical span at residues 97–119; that stretch reads DIWLSVDITCCTCSILHLSAIAL. Aspartate 103 and cysteine 107 together coordinate serotonin. The DRY motif; important for ligand-induced conformation changes motif lies at 120–122; sequence DRY. Residues 120–139 lie on the Cytoplasmic side of the membrane; the sequence is DRYRAITDAVEYARKRTPKH. Residues 140-159 traverse the membrane as a helical segment; the sequence is AGIMITIVWIISVFISMPPL. Residues 160–178 are Extracellular-facing; it reads FWRHQGTSRDDECIIKHDH. A helical membrane pass occupies residues 179 to 202; it reads IVSTIYSTFGAFYIPLALILILYY. Over 203 to 291 the chain is Cytoplasmic; it reads KIYRAAKTLY…KISGTRERKA (89 aa). Residues 292–315 form a helical membrane-spanning segment; it reads ATTLGLILGAFVICWLPFFVKELV. At 316-327 the chain is on the extracellular side; that stretch reads VNVCDKCKISEE. The chain crosses the membrane as a helical span at residues 328–350; it reads MSNFLAWLGYLNSLINPLIYTIF. An NPxxY motif; important for ligand-induced conformation changes and signaling motif is present at residues 343 to 347; sequence NPLIY. The Cytoplasmic portion of the chain corresponds to 351–366; it reads NEDFKKAFQKLVRCRC.

It belongs to the G-protein coupled receptor 1 family.

Its subcellular location is the cell membrane. In terms of biological role, G-protein coupled receptor for 5-hydroxytryptamine (serotonin). Also functions as a receptor for various alkaloids and psychoactive substances. Receptor for lasmiditan, a drug for the treatment of acute migraine. Ligand binding causes a conformation change that triggers signaling via guanine nucleotide-binding proteins (G proteins) and modulates the activity of downstream effectors, such as adenylate cyclase. HTR1F is coupled to G(i)/G(o) G alpha proteins and mediates inhibitory neurotransmission by inhibiting adenylate cyclase activity. In Homo sapiens (Human), this protein is 5-hydroxytryptamine receptor 1F.